Consider the following 26-residue polypeptide: Histone H2B.1, sperm (26 aa).

The interval Met1 to Arg26 is disordered. 3 consecutive short sequence motifs (SPKK motif) follow at residues Ser6 to Lys9, Ser11 to Lys14, and Ser16 to Lys19. Over residues Pro7–Arg26 the composition is skewed to basic residues. A phosphoserine mark is found at Ser11 and Ser16.

It belongs to the histone H2B family. The nucleosome is a histone octamer containing two molecules each of H2A, H2B, H3 and H4 assembled in one H3-H4 heterotetramer and two H2A-H2B heterodimers. The octamer wraps approximately 147 bp of DNA. In terms of processing, monoubiquitination gives a specific tag for epigenetic transcriptional activation and is also prerequisite for histone H3 'Lys-4' and 'Lys-79' methylation. Post-translationally, phosphorylated on SPKK motifs 2 and 3; which may regulate DNA binding. Dephosphorylated during maturation of spermatids to mature sperm and rephosphorylated at fertilization.

The protein resides in the nucleus. The protein localises to the chromosome. In terms of biological role, core component of nucleosome. Nucleosomes wrap and compact DNA into chromatin, limiting DNA accessibility to the cellular machineries which require DNA as a template. Histones thereby play a central role in transcription regulation, DNA repair, DNA replication and chromosomal stability. DNA accessibility is regulated via a complex set of post-translational modifications of histones, also called histone code, and nucleosome remodeling. In Echinus esculentus (Sea urchin), this protein is Histone H2B.1, sperm.